Consider the following 2592-residue polypeptide: 6-hydroxymellein synthase cdmE (2592 aa).

A compositionally biased stretch (basic and acidic residues) spans 1–11; the sequence is MVLHPSDRRFP. Residues 1 to 25 form a disordered region; sequence MVLHPSDRRFPETNGVGGHSKDSSA. Positions 32-456 constitute a Ketosynthase family 3 (KS3) domain; it reads LEPLAIVGFA…GTNAHVVLES (425 aa). Active-site for beta-ketoacyl synthase activity residues include C205, H340, and H379. Residues 589–910 are malonyl-CoA:ACP transacylase (MAT) domain; the sequence is VFTGQGAQWP…RYSHTITRKK (322 aa). The N-terminal hotdog fold stretch occupies residues 978 to 1113; it reads HELLGSPDPD…GFIESKCESD (136 aa). Positions 978–1291 are dehydratase (DH) domain; sequence HELLGSPDPD…IRGTELCLLS (314 aa). Positions 978–1296 constitute a PKS/mFAS DH domain; the sequence is HELLGSPDPD…LCLLSAGRGD (319 aa). Residues 1140 to 1296 are C-terminal hotdog fold; sequence TQIGSISAFY…LCLLSAGRGD (157 aa). Positions 1462 and 1484 each coordinate S-adenosyl-L-methionine. Positions 1483–1591 are methyltransferase (CMeT) domain; it reads LEIGTGFGSV…HSLLKPGGKL (109 aa). Positions 1887–2199 are enoyl reductase (ER) domain; it reads GLLVWSDDEA…NDSNMDTAVI (313 aa). The tract at residues 2223 to 2398 is ketoreductase (KR) domain; that stretch reads ATYVIAGGLG…IPGMSVNLGN (176 aa). The Carrier domain occupies 2509 to 2586; the sequence is VAASHVTEAI…GLSEKIARQS (78 aa). Residue S2546 is modified to O-(pantetheine 4'-phosphoryl)serine.

The catalysed reaction is 5 malonyl-CoA + AH2 + 5 H(+) = 6-hydroxymellein + A + 5 CO2 + 5 CoA + H2O. It participates in secondary metabolite biosynthesis; terpenoid biosynthesis. Functionally, highly reducing polyketide synthase; part of the gene cluster that mediates the biosynthesis of chrodrimanin B, a meroterpenoid that acts as a potent blocker of insect GABA-gated chloride channels. The first step of the pathway is the biosynthesis of 6-hydroxymellein by the polyketide synthase cdmE. The prenyltransferase cdmH acts as a 6-hydroxymellein 5-farnesyltransferase and produces the hydrophobic metabolite verruculide C. The FAD-dependent monooxygenase cdmI further converts verruculide C into verruculide B. The terpene cyclase cdmG then produced the pentacyclic molecule 3-hydroxypentacecilide A, the backbone structure of chrodrimanin B, via folding the farnesyl moiety of the substrate into the chair-boat conformation. The short-chain dehydrogenase/reductase cdmF functions as the 3-OH dehydrogenase that oxidizes the C-3 hydroxyl group of 3-hydroxypentacecilide A and produces chrodrimanin C, the dehydrogenated product of 3-hydroxypentacecilide A. The cytochrome P450 monooxygenase cdmJ then accepts both 3-hydroxypentacecilide A and chrodrimanin C and functions as a C-7-beta-hydroxylase to produce respectively chrodrimanin H and chrodrimanin F. The dioxygenase cdmA accepts chrodrimanin H to afford chrodrimanin E, which is further transformed to chrodrimanin A by the dioxygenase cdmD. CdmA can also accept chrodrimanin C as substrate to convert it into verruculide A, which is further converted into chrodrimanin T by cdmD. The last step of the biosynthesis is proposed to be performed by the acetyltransferase cdmC which acetylates chrodrimanin A to yield chrodrimanin B. The pathway may also lead to the production of additional shunt products, including chrodrimanins T and U. The chain is 6-hydroxymellein synthase cdmE from Talaromyces verruculosus (Penicillium verruculosum).